A 37-amino-acid polypeptide reads, in one-letter code: Large ribosomal subunit protein bL36 (37 aa).

This sequence belongs to the bacterial ribosomal protein bL36 family.

The polypeptide is Large ribosomal subunit protein bL36 (Acidithiobacillus ferrooxidans (strain ATCC 23270 / DSM 14882 / CIP 104768 / NCIMB 8455) (Ferrobacillus ferrooxidans (strain ATCC 23270))).